We begin with the raw amino-acid sequence, 109 residues long: MASIQFIQGVDEDIIPTVRLTRSRDGQTGTAVFRFVQPKLLQQQGEITGMYMIDEEGEIVTREVQAKFVNGQPQIIEALYVMKNAQAWERFMRFMNRYAEAKGLSFQRS.

The protein belongs to the Psb28 family. Part of the photosystem II complex.

The protein resides in the plastid. Its subcellular location is the chloroplast thylakoid membrane. The protein is Photosystem II reaction center Psb28 protein of Cyanidioschyzon merolae (strain NIES-3377 / 10D) (Unicellular red alga).